A 272-amino-acid polypeptide reads, in one-letter code: Replication-associated protein A (272 aa).

The region spanning 11 to 114 is the CRESS-DNA virus Rep endonuclease domain; it reads SHRNANTFLT…PLAVFERGTF (104 aa). The RCR-1 motif lies at 18–21; that stretch reads FLTY. Positions 52, 60, and 62 each coordinate a divalent metal cation. The RCR-2 motif lies at 60–62; that stretch reads HLH. Tyr100 (for DNA cleavage activity) is an active-site residue. The short motif at 100-103 is the RCR-3 element; sequence YILK. Position 104 (Glu104) interacts with a divalent metal cation. An oligomerization region spans residues 175-187; the sequence is SANKLFPEIQEEF. Positions 198–202 are binding to RBR1; that stretch reads LLCNE. The transactivation stretch occupies residues 221–230; that stretch reads MLLQPACYTL. The interval 245-272 is disordered; sequence SHQMKDQESRASTSSAQQEQENLLGPEA. The segment covering 254-265 has biased composition (polar residues); it reads RASTSSAQQEQE.

It belongs to the geminiviridae Rep protein family. In terms of assembly, homooligomer. Interacts with host retinoblastoma-related protein 1 (RBR1), and may thereby deregulate the host cell cycle. Part of the C- and V-complexes which are RepA-Rep-DNA complexes involved in the c-sense and v-sense transcription. The cofactor is Mg(2+). Mn(2+) serves as cofactor.

The protein localises to the host nucleus. It is found in the host cytoplasm. Functionally, implicated in enhancement of V-sense gene expression. Acts a an inhibitor of C-sense gene transcription. This Avena sativa (Oat) protein is Replication-associated protein A.